The chain runs to 774 residues: E3 ubiquitin-protein ligase RFWD3 (774 aa).

Ser46 and Ser63 each carry phosphoserine; by ATM and ATR. Disordered stretches follow at residues 95 to 116 (NPRT…PASS), 139 to 225 (PSSS…AEYG), and 257 to 280 (GGKT…ASMD). The span at 106 to 116 (SDGNHTIPASS) shows a compositional bias: polar residues. The segment covering 150–162 (RTRRRVSASRRAR) has biased composition (basic residues). Residues 211–221 (SSSSDSDSDSS) are compositionally biased toward low complexity. The RING-type; degenerate zinc finger occupies 287 to 331 (CTICLEQWTNAGDHRLSALRCGHLFGYRCISTWLKGQVRKCPQCN). Residues 361 to 413 (SLLKEQMLRKQAELESAQCRLQLQVLTDKCTRLQRRVQDLQKLTSHQSQNLQQ) are a coiled coil. WD repeat units lie at residues 495–537 (MHGK…QTYN), 539–577 (GRPV…SHVQ), and 583–628 (KARC…SHWP).

In terms of assembly, interacts with MDM2 and p53/TP53. Binds to the RPA complex via direct interaction with RPA2. Interacts with RAD51. Post-translationally, phosphorylated at Ser-46 and Ser-63 upon DNA damage by ATM or ATR. ATM phosphorylation occurs at early times upon DNA damage, while ATR is the major kinase at later times. Phosphorylation by ATM and ATR is required to stabilize p53/TP53. Part of the phosphorylation depends upon RPA2 presence.

It is found in the nucleus. It localises to the PML body. The protein resides in the cytoplasm. It catalyses the reaction S-ubiquitinyl-[E2 ubiquitin-conjugating enzyme]-L-cysteine + [acceptor protein]-L-lysine = [E2 ubiquitin-conjugating enzyme]-L-cysteine + N(6)-ubiquitinyl-[acceptor protein]-L-lysine.. It participates in protein modification; protein ubiquitination. Its function is as follows. E3 ubiquitin-protein ligase required for the repair of DNA interstrand cross-links (ICL) in response to DNA damage. Plays a key role in RPA-mediated DNA damage signaling and repair. Acts by mediating ubiquitination of the RPA complex (RPA1, RPA2 and RPA3 subunits) and RAD51 at stalled replication forks, leading to remove them from DNA damage sites and promote homologous recombination. Also mediates the ubiquitination of p53/TP53 in the late response to DNA damage, and acts as a positive regulator of p53/TP53 stability, thereby regulating the G1/S DNA damage checkpoint. May act by catalyzing the formation of short polyubiquitin chains on p53/TP53 that are not targeted to the proteasome. In response to ionizing radiation, interacts with MDM2 and enhances p53/TP53 ubiquitination, possibly by restricting MDM2 from extending polyubiquitin chains on ubiquitinated p53/TP53. Required to translesion DNA synthesis across DNA-protein cross-link adducts by catalyzing ubiquitination of proteins on single-stranded DNA (ssDNA). This is E3 ubiquitin-protein ligase RFWD3 from Homo sapiens (Human).